The chain runs to 538 residues: Beta-1-syntrophin (538 aa).

Ala-2 bears the N-acetylalanine mark. PH domains are found at residues 19–298 (RAQR…SNVN) and 322–433 (EIRH…QGCH). Phosphoserine occurs at positions 87, 126, and 205. The PDZ domain maps to 112 to 195 (GVKVLKQELG…EVLLEVKYMR (84 aa)). The disordered stretch occupies residues 205–237 (SPVSEIGWETPPPESPRLGGSTSDPPSSQSFSF). Thr-214 is subject to Phosphothreonine. A phosphoserine mark is found at Ser-219, Ser-232, Ser-236, and Ser-389. Residues 225-236 (STSDPPSSQSFS) are compositionally biased toward low complexity. One can recognise an SU domain in the interval 482–538 (PYEKLKMSSDDGIRMLYLDFGGKDGEIQLDLHSCPKPIVFIIHSFLSAKITRLGLVA). The tract at residues 518–538 (PIVFIIHSFLSAKITRLGLVA) is calmodulin-binding.

It belongs to the syntrophin family. In terms of assembly, monomer and homodimer. Interacts with the other members of the syntrophin family SNTA1 and SNTB2; with the sodium channel proteins SCN4A and SCN5A. Interacts with the viral HTLV-1 TAX protein and with dystrophin protein DMD and related proteins DTNA and UTRN. Interacts with DTNB. In terms of processing, phosphorylated by CaM-kinase II. As to expression, ubiquitous.

The protein resides in the cell membrane. The protein localises to the sarcolemma. Its subcellular location is the cell junction. It localises to the cytoplasm. It is found in the cytoskeleton. Functionally, adapter protein that binds to and probably organizes the subcellular localization of a variety of membrane proteins. May link various receptors to the actin cytoskeleton and the dystrophin glycoprotein complex. In Homo sapiens (Human), this protein is Beta-1-syntrophin (SNTB1).